A 369-amino-acid chain; its full sequence is Peptide chain release factor 2 (369 aa).

The residue at position 250 (Gln250) is an N5-methylglutamine.

The protein belongs to the prokaryotic/mitochondrial release factor family. Methylated by PrmC. Methylation increases the termination efficiency of RF2.

Its subcellular location is the cytoplasm. In terms of biological role, peptide chain release factor 2 directs the termination of translation in response to the peptide chain termination codons UGA and UAA. The chain is Peptide chain release factor 2 (prfB) from Rickettsia prowazekii (strain Madrid E).